The chain runs to 306 residues: 4-hydroxybenzoate geranyltransferase 2 (306 aa).

The next 8 helical transmembrane spans lie at 38–58 (IGSWLLAWPAFWSVALIADLG), 61–81 (PKMLAIFGWWAVWIRGAGCTI), 119–139 (LFIGLGVLYQFNILTLALAIV), 153–173 (ITYWPQAFLGVMISWGALLGS), 178–198 (GSVVPSIAYPLYISSFFWTLV), 229–249 (IWITWFGIGCIGALLLGGFIV), 251–271 (IGLPYYVFLAIATGQLIWQIF), and 285–305 (FVSNQWFGAIIFTGILVGRLF).

The protein belongs to the UbiA prenyltransferase family. Mg(2+) serves as cofactor. In terms of tissue distribution, expressed only in roots.

It localises to the endoplasmic reticulum membrane. It carries out the reaction 4-hydroxybenzoate + (2E)-geranyl diphosphate = 3-geranyl-4-hydroxybenzoate + diphosphate. Functionally, prenyltransferase involved in the biosynthesis of shikonin, a naphthoquinone secondary metabolite. Could accept only geranyl diphosphate and not dimethylallyl diphosphate, farnesyl diphosphate, or geranylgeranyl diphosphate as substrate. This Lithospermum erythrorhizon (Purple gromwell) protein is 4-hydroxybenzoate geranyltransferase 2 (PGT-2).